The primary structure comprises 178 residues: Large ribosomal subunit protein uL6 (178 aa).

The protein belongs to the universal ribosomal protein uL6 family. As to quaternary structure, part of the 50S ribosomal subunit.

Its function is as follows. This protein binds to the 23S rRNA, and is important in its secondary structure. It is located near the subunit interface in the base of the L7/L12 stalk, and near the tRNA binding site of the peptidyltransferase center. This is Large ribosomal subunit protein uL6 from Enterococcus faecalis (strain ATCC 700802 / V583).